The sequence spans 334 residues: Delta(1)-pyrroline-2-carboxylate/Delta(1)-piperideine-2-carboxylate reductase (334 aa).

The Charge relay system role is filled by S44. H45 acts as the Proton donor in catalysis. R49 lines the substrate pocket. NADP(+) is bound at residue 117–121 (HFSAL). T157 is a substrate binding site. 175-177 (DFA) is a binding site for NADP(+). 183-184 (RG) contributes to the substrate binding site. E185 serves as the catalytic Charge relay system. Residues 226–227 (HK) and 301–307 (RLPSQRR) contribute to the NADP(+) site.

This sequence belongs to the LDH2/MDH2 oxidoreductase family. In terms of assembly, homodimer.

The catalysed reaction is L-pipecolate + NADP(+) = Delta(1)-piperideine-2-carboxylate + NADPH + H(+). It carries out the reaction L-proline + NADP(+) = 1-pyrroline-2-carboxylate + NADPH + H(+). The enzyme catalyses cis-4-hydroxy-L-proline + NADP(+) = Delta(1)-pyrroline-(4S)-hydroxy-2-carboxylate + NADPH + 2 H(+). Functionally, catalyzes the reduction of both Delta(1)-pyrroline-2-carboxylate (Pyr2C) and Delta(1)-piperideine-2-carboxylate (Pip2C) to L-proline and L-pipecolate, respectively, using NADPH as the electron donor. Cannot use NADH instead of NADPH. Is likely involved in a degradation pathway that converts trans-3-hydroxy-L-proline (t3LHyp) to L-proline, which would allow P.aeruginosa to grow on t3LHyp as a sole carbon source. Can also catalyze the reverse oxidation reactions, albeit at a much lower rate. Is also able to use Delta(1)-pyrroline-(4S)-hydroxy-2-carboxylate (Pyr4SH2C) and cis-4-hydroxy-L-proline (c4LHyp) as substrates, and might be involved in the metabolism of c4LHyp, a compound which is generated by the hydroxylation of free L-proline in bacteria. This is Delta(1)-pyrroline-2-carboxylate/Delta(1)-piperideine-2-carboxylate reductase from Pseudomonas aeruginosa (strain ATCC 15692 / DSM 22644 / CIP 104116 / JCM 14847 / LMG 12228 / 1C / PRS 101 / PAO1).